Consider the following 917-residue polypeptide: Protein Ami (917 aa).

An N-terminal signal peptide occupies residues 1–30 (MKKLVKSAVVFAGLVFIGTSATMITEKASA). Positions 118–245 (KPEGIVIHET…YLGGTTHTDP (128 aa)) constitute an N-acetylmuramoyl-L-alanine amidase domain. Residues 262 to 917 (LINEKYKAMQ…KAANLSAKKQ (656 aa)) form a GW repeat region, necessary and sufficient for cell surface attachment region. 8 GW domains span residues 279-358 (YDKA…TFYT), 361-435 (MEKT…TTKY), 440-519 (YDKA…TFYT), 522-596 (MEKN…ATQY), 601-679 (YDKA…TFYT), 682-756 (MEKT…TTKY), 761-840 (YDKA…TFYT), and 843-917 (MEKN…AKKQ).

The protein in the N-terminal section; belongs to the N-acetylmuramoyl-L-alanine amidase 2 family.

The protein resides in the cell surface. The protein localises to the cell membrane. Functionally, a bacteriolysin able to lyse both L.monocytogenes and S.aureus. This Listeria monocytogenes serotype 1/2a (strain EGD / Mackaness) protein is Protein Ami.